A 247-amino-acid polypeptide reads, in one-letter code: tRNA pseudouridine synthase A (247 aa).

The active-site Nucleophile is the aspartate 53. Tyrosine 112 lines the substrate pocket.

It belongs to the tRNA pseudouridine synthase TruA family. Homodimer.

The catalysed reaction is uridine(38/39/40) in tRNA = pseudouridine(38/39/40) in tRNA. Formation of pseudouridine at positions 38, 39 and 40 in the anticodon stem and loop of transfer RNAs. This chain is tRNA pseudouridine synthase A, found in Anaplasma marginale (strain Florida).